The sequence spans 77 residues: ATP synthase subunit c (77 aa).

The next 2 membrane-spanning stretches (helical) occupy residues 13–33 (IATVGYGLAAIGPGIGVGIVA) and 55–75 (FLGIAFSEALALIGLATYFIF).

This sequence belongs to the ATPase C chain family. In terms of assembly, F-type ATPases have 2 components, F(1) - the catalytic core - and F(0) - the membrane proton channel. F(1) has five subunits: alpha(3), beta(3), gamma(1), delta(1), epsilon(1). F(0) has three main subunits: a(1), b(2) and c(10-14). The alpha and beta chains form an alternating ring which encloses part of the gamma chain. F(1) is attached to F(0) by a central stalk formed by the gamma and epsilon chains, while a peripheral stalk is formed by the delta and b chains.

The protein resides in the cell membrane. F(1)F(0) ATP synthase produces ATP from ADP in the presence of a proton or sodium gradient. F-type ATPases consist of two structural domains, F(1) containing the extramembraneous catalytic core and F(0) containing the membrane proton channel, linked together by a central stalk and a peripheral stalk. During catalysis, ATP synthesis in the catalytic domain of F(1) is coupled via a rotary mechanism of the central stalk subunits to proton translocation. In terms of biological role, key component of the F(0) channel; it plays a direct role in translocation across the membrane. A homomeric c-ring of between 10-14 subunits forms the central stalk rotor element with the F(1) delta and epsilon subunits. The polypeptide is ATP synthase subunit c (Clavibacter sepedonicus (Clavibacter michiganensis subsp. sepedonicus)).